The following is a 252-amino-acid chain: Type III pantothenate kinase (252 aa).

Position 6–13 (6–13) interacts with ATP; the sequence is DIGNTSTA. Position 104-107 (104-107) interacts with substrate; that stretch reads GADR. Aspartate 106 serves as the catalytic Proton acceptor. Aspartate 128 serves as a coordination point for K(+). Threonine 131 is an ATP binding site. Threonine 183 is a binding site for substrate.

It belongs to the type III pantothenate kinase family. Homodimer. Requires NH4(+) as cofactor. The cofactor is K(+).

It localises to the cytoplasm. It carries out the reaction (R)-pantothenate + ATP = (R)-4'-phosphopantothenate + ADP + H(+). It functions in the pathway cofactor biosynthesis; coenzyme A biosynthesis; CoA from (R)-pantothenate: step 1/5. In terms of biological role, catalyzes the phosphorylation of pantothenate (Pan), the first step in CoA biosynthesis. The protein is Type III pantothenate kinase of Thermus thermophilus (strain ATCC BAA-163 / DSM 7039 / HB27).